Here is a 1112-residue protein sequence, read N- to C-terminus: Cytosolic carboxypeptidase 4 (1112 aa).

The segment at 291 to 345 (TTEPPHDLPEEDFEDDGDDEVDKDSDTEDGKVEDDDLETDVNKLSSKPGLDRPEE) is disordered. Residues 299–329 (PEEDFEDDGDDEVDKDSDTEDGKVEDDDLET) are compositionally biased toward acidic residues. The Peptidase M14 domain maps to 732-1022 (YPYTYTALMT…HPVDGLQGLQ (291 aa)). 3 residues coordinate Zn(2+): H804, E807, and H901. E986 serves as the catalytic Proton donor/acceptor.

This sequence belongs to the peptidase M14 family. As to quaternary structure, interacts with MYLK. Interacts with TCF4. Requires Zn(2+) as cofactor. Expressed in corneal endothelium.

The protein localises to the cytoplasm. It localises to the cytosol. The catalysed reaction is (L-glutamyl)(n+1)-gamma-L-glutamyl-L-glutamyl-[protein] + H2O = (L-glutamyl)(n)-gamma-L-glutamyl-L-glutamyl-[protein] + L-glutamate. It carries out the reaction C-terminal L-alpha-aminoacyl-L-glutamyl-L-glutamyl-[tubulin] + H2O = C-terminal L-alpha-aminoacyl-L-glutamyl-[tubulin] + L-glutamate. Metallocarboxypeptidase that mediates deglutamylation of tubulin and non-tubulin target proteins. Catalyzes the removal of polyglutamate side chains present on the gamma-carboxyl group of glutamate residues within the C-terminal tail of tubulin protein. Specifically cleaves tubulin long-side-chains, while it is not able to remove the branching point glutamate. Also catalyzes the removal of polyglutamate residues from the carboxy-terminus of non-tubulin proteins such as MYLK. This chain is Cytosolic carboxypeptidase 4, found in Homo sapiens (Human).